Here is a 469-residue protein sequence, read N- to C-terminus: Argininosuccinate lyase (469 aa).

It belongs to the lyase 1 family. Argininosuccinate lyase subfamily.

The protein resides in the cytoplasm. The catalysed reaction is 2-(N(omega)-L-arginino)succinate = fumarate + L-arginine. It functions in the pathway amino-acid biosynthesis; L-arginine biosynthesis; L-arginine from L-ornithine and carbamoyl phosphate: step 3/3. The chain is Argininosuccinate lyase from Novosphingobium aromaticivorans (strain ATCC 700278 / DSM 12444 / CCUG 56034 / CIP 105152 / NBRC 16084 / F199).